The primary structure comprises 505 residues: DEAD-box ATP-dependent RNA helicase 38 (505 aa).

The segment at 1-81 (MADGGKPPTP…DQGPPLLDDS (81 aa)) is disordered. The span at 27–44 (KAAAAAEAASSSSSNEPA) shows a compositional bias: low complexity. The short motif at 100–129 (AAFEDLKLTPELLKGLHDEMGFSRPSKIQA) is the Q motif element. In terms of domain architecture, Helicase ATP-binding spans 134 to 310 (MILTPPYKDL…TRVIKDGNQI (177 aa)). 147-154 (AHNGSGKT) serves as a coordination point for ATP. The DEAD box signature appears at 254 to 257 (DEAD). The region spanning 338-493 (VIKDKIFEFG…EVRNWQSEED (156 aa)) is the Helicase C-terminal domain.

The protein belongs to the DEAD box helicase family. DDX19/DBP5 subfamily.

It localises to the cytoplasm. The protein localises to the nucleus. It carries out the reaction ATP + H2O = ADP + phosphate + H(+). In terms of biological role, ATP-dependent RNA helicase essential for mRNA export from the nucleus. Plays an important role in the positive regulation of CBF/DREB transcription factors. The sequence is that of DEAD-box ATP-dependent RNA helicase 38 from Oryza sativa subsp. japonica (Rice).